We begin with the raw amino-acid sequence, 354 residues long: Protein RecA (354 aa).

Residue glycine 67–threonine 74 coordinates ATP.

Belongs to the RecA family.

The protein localises to the cytoplasm. Functionally, can catalyze the hydrolysis of ATP in the presence of single-stranded DNA, the ATP-dependent uptake of single-stranded DNA by duplex DNA, and the ATP-dependent hybridization of homologous single-stranded DNAs. It interacts with LexA causing its activation and leading to its autocatalytic cleavage. This Yersinia enterocolitica serotype O:8 / biotype 1B (strain NCTC 13174 / 8081) protein is Protein RecA.